Here is a 167-residue protein sequence, read N- to C-terminus: MQMMLMFLLLLAAIMVIRATSPYYGALATAWLALLAALLLLDADIIFPAIILMLIYLGGMLVVFIYSTAYAADLMPLPINLTMSALMASFGVMLITMISSPSIETLCETKPWLVYDMQPSYMLFDIYQRGSSMFIVAVMILTALLFSILEVVSHRQTTMKWFIHSTY.

Transmembrane regions (helical) follow at residues 21 to 41, 45 to 65, 78 to 98, and 132 to 152; these read SPYYGALATAWLALLAALLLL, IIFPAIILMLIYLGGMLVVFI, PINLTMSALMASFGVMLITMI, and SMFIVAVMILTALLFSILEVV.

The protein belongs to the complex I subunit 6 family.

The protein resides in the mitochondrion membrane. The enzyme catalyses a ubiquinone + NADH + 5 H(+)(in) = a ubiquinol + NAD(+) + 4 H(+)(out). Its function is as follows. Core subunit of the mitochondrial membrane respiratory chain NADH dehydrogenase (Complex I) that is believed to belong to the minimal assembly required for catalysis. Complex I functions in the transfer of electrons from NADH to the respiratory chain. The immediate electron acceptor for the enzyme is believed to be ubiquinone. The sequence is that of NADH-ubiquinone oxidoreductase chain 6 (ND6) from Branchiostoma floridae (Florida lancelet).